A 315-amino-acid chain; its full sequence is Aspartate carbamoyltransferase catalytic subunit (315 aa).

Carbamoyl phosphate contacts are provided by Arg-55 and Thr-56. Lys-83 is an L-aspartate binding site. Residues Arg-105, His-138, and Gln-141 each coordinate carbamoyl phosphate. Arg-171 and Arg-225 together coordinate L-aspartate. Carbamoyl phosphate-binding residues include Gly-266 and Pro-267.

It belongs to the aspartate/ornithine carbamoyltransferase superfamily. ATCase family. As to quaternary structure, heterododecamer (2C3:3R2) of six catalytic PyrB chains organized as two trimers (C3), and six regulatory PyrI chains organized as three dimers (R2).

The catalysed reaction is carbamoyl phosphate + L-aspartate = N-carbamoyl-L-aspartate + phosphate + H(+). Its pathway is pyrimidine metabolism; UMP biosynthesis via de novo pathway; (S)-dihydroorotate from bicarbonate: step 2/3. Catalyzes the condensation of carbamoyl phosphate and aspartate to form carbamoyl aspartate and inorganic phosphate, the committed step in the de novo pyrimidine nucleotide biosynthesis pathway. The chain is Aspartate carbamoyltransferase catalytic subunit from Mycolicibacterium gilvum (strain PYR-GCK) (Mycobacterium gilvum (strain PYR-GCK)).